A 105-amino-acid chain; its full sequence is Small ribosomal subunit protein uS10 (105 aa).

The protein belongs to the universal ribosomal protein uS10 family. Part of the 30S ribosomal subunit.

Its function is as follows. Involved in the binding of tRNA to the ribosomes. The protein is Small ribosomal subunit protein uS10 of Trichormus variabilis (strain ATCC 29413 / PCC 7937) (Anabaena variabilis).